The following is a 317-amino-acid chain: Large ribosomal subunit protein uL10 (317 aa).

Residues 286 to 317 (AGAGAAAEKKEEAKKEESESEEDDDMGFGLFD) form a disordered region. Over residues 292-302 (AEKKEEAKKEE) the composition is skewed to basic and acidic residues.

This sequence belongs to the universal ribosomal protein uL10 family. As to quaternary structure, P0 forms a pentameric complex by interaction with dimers of P1 and P2. Phosphorylated.

Its function is as follows. Ribosomal protein P0 is the functional equivalent of E.coli protein L10. The sequence is that of Large ribosomal subunit protein uL10 (RpLP0) from Ceratitis capitata (Mediterranean fruit fly).